Consider the following 159-residue polypeptide: Ribosomal RNA large subunit methyltransferase H (159 aa).

S-adenosyl-L-methionine contacts are provided by residues Leu-76, Gly-108, and 127-132 (FSKMTF).

It belongs to the RNA methyltransferase RlmH family. As to quaternary structure, homodimer.

The protein localises to the cytoplasm. The enzyme catalyses pseudouridine(1915) in 23S rRNA + S-adenosyl-L-methionine = N(3)-methylpseudouridine(1915) in 23S rRNA + S-adenosyl-L-homocysteine + H(+). Functionally, specifically methylates the pseudouridine at position 1915 (m3Psi1915) in 23S rRNA. In Clostridium botulinum (strain Langeland / NCTC 10281 / Type F), this protein is Ribosomal RNA large subunit methyltransferase H.